We begin with the raw amino-acid sequence, 194 residues long: MRTATKTRVTAETSIELSINLDSAAESTIATGIGFLDHMLTLFAKHSRINLNVKADGDTRVDAHHTVEDVGITLGICLKEALGDKASINRYGSTYVPMDESLGFCALDLSGRSYLVFDAELTNPKLGDFDTELVEEFFQAVAFNTGMNLHLRVLYGKNTHHKIESLFKAFGRALREAITINPEIKGVNSTKGVL.

Belongs to the imidazoleglycerol-phosphate dehydratase family.

The protein localises to the cytoplasm. It catalyses the reaction D-erythro-1-(imidazol-4-yl)glycerol 3-phosphate = 3-(imidazol-4-yl)-2-oxopropyl phosphate + H2O. It participates in amino-acid biosynthesis; L-histidine biosynthesis; L-histidine from 5-phospho-alpha-D-ribose 1-diphosphate: step 6/9. The protein is Imidazoleglycerol-phosphate dehydratase of Listeria welshimeri serovar 6b (strain ATCC 35897 / DSM 20650 / CCUG 15529 / CIP 8149 / NCTC 11857 / SLCC 5334 / V8).